A 272-amino-acid polypeptide reads, in one-letter code: MNNRVHQGHFARKRFGQNFLTDQFVIDSIAAAINPQPGQAVLEIGPGLGALTEPVGERMDKMTVVELDRDLAARLQVHPQLKDKLTIIQQDAMTVNFGELSQQRGKPLRVFGNLPYNISTPLMFHLFSYTDAIADMHFMLQKEVVNRLVAGPGSKTFGRLSVMAQYYCQVIPVLEVPPTAFTPAPKVDSAVVRLVPHKSIPHPVKNIRMLSRITTQAFNQRRKTIRNSLGDLFTVEQLTELGIDPSTRAENISVEQYCKMANWLSEQPEMQS.

The S-adenosyl-L-methionine site is built by N18, L20, G45, E66, D91, and N113.

Belongs to the class I-like SAM-binding methyltransferase superfamily. rRNA adenine N(6)-methyltransferase family. RsmA subfamily.

It localises to the cytoplasm. It carries out the reaction adenosine(1518)/adenosine(1519) in 16S rRNA + 4 S-adenosyl-L-methionine = N(6)-dimethyladenosine(1518)/N(6)-dimethyladenosine(1519) in 16S rRNA + 4 S-adenosyl-L-homocysteine + 4 H(+). Its function is as follows. Specifically dimethylates two adjacent adenosines (A1518 and A1519) in the loop of a conserved hairpin near the 3'-end of 16S rRNA in the 30S particle. May play a critical role in biogenesis of 30S subunits. This Photorhabdus laumondii subsp. laumondii (strain DSM 15139 / CIP 105565 / TT01) (Photorhabdus luminescens subsp. laumondii) protein is Ribosomal RNA small subunit methyltransferase A.